Reading from the N-terminus, the 196-residue chain is MSQTALILLQRVEHLGQMGDLVHVKPGYARNFLLPQAKAMRATAANKKRFETERAQLEAQNLKKREEAERLAERMHELSVVIIRQAGDSGSLYGSVSTRDIAAAATEAGLTISRQQVVLAHPIKQLGLTEARIVLHPEVSIPLTVNVARSAEEAERQARGEAIGVQDEDENILGELQAENAAEEAAAEAAEASEEA.

It belongs to the bacterial ribosomal protein bL9 family.

Binds to the 23S rRNA. The chain is Large ribosomal subunit protein bL9 from Gluconobacter oxydans (strain 621H) (Gluconobacter suboxydans).